Here is a 210-residue protein sequence, read N- to C-terminus: Probable GTP-binding protein EngB (210 aa).

One can recognise an EngB-type G domain in the interval 25–199; that stretch reads TGIEVAFAGR…RQKLDTWFNE (175 aa). Residues 33 to 40, 60 to 64, 78 to 81, 145 to 148, and 178 to 180 contribute to the GTP site; these read GRSNAGKS, GRTQL, DLPG, TKAD, and FSS. Mg(2+) is bound by residues Ser40 and Thr62.

The protein belongs to the TRAFAC class TrmE-Era-EngA-EngB-Septin-like GTPase superfamily. EngB GTPase family. Mg(2+) is required as a cofactor.

Functionally, necessary for normal cell division and for the maintenance of normal septation. The chain is Probable GTP-binding protein EngB from Escherichia coli O157:H7.